A 1866-amino-acid chain; its full sequence is Nucleoporin Nup188 (1866 aa).

It belongs to the Nup188 family. In terms of assembly, part of the nuclear pore complex (NPC).

The protein resides in the nucleus. It is found in the nuclear pore complex. Functionally, component of the nuclear pore complex (NPC), a complex required for the trafficking across the nuclear envelope. Required for proper protein transport into the nucleus. This Drosophila melanogaster (Fruit fly) protein is Nucleoporin Nup188.